Here is a 359-residue protein sequence, read N- to C-terminus: 4-galactosyl-N-acetylglucosaminide 3-alpha-L-fucosyltransferase 9 (359 aa).

The Cytoplasmic portion of the chain corresponds to 1–11 (MTSTSKGILRP). The chain crosses the membrane as a helical; Signal-anchor for type II membrane protein span at residues 12–32 (FLIVCIILGCFVACLLIYIKP). The Lumenal portion of the chain corresponds to 33–359 (TNSWVFSPME…VGNLEKWFWN (327 aa)). N62 carries an N-linked (GlcNAc...) asparagine glycan. Positions 63–168 (ETTILVWVWP…RRDSDIQVPY (106 aa)) are acceptor-binding. Residue Q75 participates in a beta-D-galactosyl-(1-&gt;4)-N-acetyl-beta-D-glucosaminyl derivative binding. Intrachain disulfides connect C82–C335, C91–C338, and C190–C238. An N-linked (GlcNAc...) asparagine glycan is attached at N101. E137 contributes to the a beta-D-galactosyl-(1-&gt;4)-N-acetyl-beta-D-glucosaminyl derivative binding site. Catalysis depends on E137, which acts as the Nucleophile. Residue E137 participates in GDP-beta-L-fucose binding. N153 is a glycosylation site (N-linked (GlcNAc...) asparagine). GDP-beta-L-fucose contacts are provided by Y168, V192, S194, N195, R202, V226, Y241, N246, Y252, E255, and K256. The segment at 169-326 (GFLTVSTSPF…NWRKDFTVNL (158 aa)) is donor-binding. The segment at 327–359 (PRFWESHACLACDHVKRHQEYKSVGNLEKWFWN) is acceptor-binding.

Belongs to the glycosyltransferase 10 family. Homodimer. In terms of processing, N-glycosylated with complex-type N-glycans.

It localises to the golgi apparatus. The protein resides in the trans-Golgi network membrane. It is found in the golgi apparatus membrane. It catalyses the reaction a beta-D-galactosyl-(1-&gt;4)-N-acetyl-beta-D-glucosaminyl derivative + GDP-beta-L-fucose = a beta-D-galactosyl-(1-&gt;4)-[alpha-L-fucosyl-(1-&gt;3)]-N-acetyl-beta-D-glucosaminyl derivative + GDP + H(+). The enzyme catalyses an alpha-Neu5Ac-(2-&gt;3)-beta-D-Gal-(1-&gt;4)-beta-D-GlcNAc-(1-&gt;3)-beta-D-Gal-(1-&gt;4)-beta-D-GlcNAc derivative + GDP-beta-L-fucose = an alpha-Neu5Ac-(2-&gt;3)-beta-D-Gal-(1-&gt;4)-beta-D-GlcNAc-(1-&gt;3)-beta-D-Gal-(1-&gt;4)-[alpha-L-Fuc-(1-&gt;3)]-beta-D-GlcNAc derivative + GDP + H(+). The catalysed reaction is alpha-N-glycoloylneuraminosyl-(2-&gt;3)-beta-D-galactosyl-(1-&gt;4)-N-acetyl-beta-D-glucosaminyl-(1-&gt;3)-beta-D-galactosyl-(1-&gt;4)-N-acetyl-beta-D-glucosaminyl-(1-&gt;3)-beta-D-galactosyl-(1-&gt;4)-beta-D-glucosyl-(1&lt;-&gt;1')-ceramide + GDP-beta-L-fucose = alpha-N-glycoloylneuraminosyl-(2-&gt;3)-beta-D-galactosyl-(1-&gt;4)-N-acetyl-beta-D-glucosaminyl-(1-&gt;3)-beta-D-galactosyl-(1-&gt;4)-[alpha-L-fucosyl-(1-&gt;3)]-N-acetyl-beta-D-glucosaminyl-(1-&gt;3)-beta-D-galactosyl-(1-&gt;4)-beta-D-glucosyl-(1&lt;-&gt;1')-ceramide + GDP + H(+). It carries out the reaction alpha-D-galactosyl-(1-&gt;3)-beta-D-galactosyl-(1-&gt;4)-N-acetyl-beta-D-glucosaminyl-(1-&gt;3)-beta-D-galactosyl-(1-&gt;4)-beta-D-glucosyl-(1&lt;-&gt;1')-ceramide + GDP-beta-L-fucose = a neolactoside IV(3)-alpha-Gal,III(3)-alpha-Fuc-nLc4Cer + GDP + H(+). It catalyses the reaction a neolactoside nLc4Cer + GDP-beta-L-fucose = a neolactoside III(3)-alpha-Fuc-nLc4Cer + GDP + H(+). The enzyme catalyses an N-acetyl-alpha-neuraminyl-(2-&gt;3)-beta-D-galactosyl-(1-&gt;4)-N-acetyl-beta-D-glucosaminyl derivative + GDP-beta-L-fucose = an alpha-Neu5Ac-(2-&gt;3)-beta-D-Gal-(1-&gt;4)-[alpha-L-Fuc-(1-&gt;3)]-beta-D-GlcNAc derivative + GDP + H(+). The catalysed reaction is beta-D-Gal-(1-&gt;4)-beta-D-GlcNAc-(1-&gt;3)-beta-D-Gal-(1-&gt;4)-D-Glc + GDP-beta-L-fucose = beta-D-Gal-(1-&gt;4)-[alpha-L-Fuc-(1-&gt;3)]-beta-D-GlcNAc-(1-&gt;3)-beta-D-Gal-(1-&gt;4)-D-Glc + GDP + H(+). It carries out the reaction an alpha-L-Fuc-(1-&gt;2)-beta-D-Gal-(1-&gt;4)-beta-D-GlcNAc derivative + GDP-beta-L-fucose = an alpha-L-Fuc-(1-&gt;2)-beta-D-Gal-(1-&gt;4)-[alpha-L-Fuc-(1-&gt;3)]-beta-D-GlcNAc derivative + GDP + H(+). It participates in protein modification; protein glycosylation. Its pathway is glycolipid biosynthesis. With respect to regulation, activated by Mn2+. Its function is as follows. Catalyzes alpha(1-&gt;3) linkage of fucosyl moiety transferred from GDP-beta-L-fucose to N-acetyl glucosamine (GlcNAc) within type 2 lactosamine (LacNAc, beta-D-Gal-(1-&gt;4)-beta-D-GlcNAc-) glycan attached to glycolipids and N- or O-linked glycoproteins. Fucosylates distal type 2 LacNAc and its fucosylated (H-type 2 LacNAc) and sialylated (sialyl-type 2 LacNAc) derivatives to form Lewis x (Lex) (CD15) and Lewis y (Ley) antigenic epitopes involved in cell adhesion and differentiation. Generates Lex epitopes in the brain, presumably playing a role in the maintenance of neuronal stemness and neurite outgrowth in progenitor neural cells. Fucosylates the internal type 2 LacNAc unit of the polylactosamine chain to form VIM-2 antigen that serves as recognition epitope for SELE. Can also modify milk oligosaccharides in particular type 2 tetrasaccharide LNnT. The polypeptide is 4-galactosyl-N-acetylglucosaminide 3-alpha-L-fucosyltransferase 9 (Rattus norvegicus (Rat)).